Here is a 185-residue protein sequence, read N- to C-terminus: Protein LURP-one-related 13 (185 aa).

This sequence belongs to the LOR family.

Might be related to the phospholipid scramblase and tubby-like superfamily of membrane tethered transcription factors. In Arabidopsis thaliana (Mouse-ear cress), this protein is Protein LURP-one-related 13.